A 53-amino-acid chain; its full sequence is MSFETWMAALDGYMTETFGLGYQDIADWTYRDAYDDGLTFREAAHRAINHEFL.

The sequence is that of Gene 87 protein (87) from Mycobacterium phage L5 (Mycobacteriophage L5).